A 414-amino-acid polypeptide reads, in one-letter code: 3-oxoacyl-[acyl-carrier-protein] synthase 2 (414 aa).

The 409-residue stretch at 3–411 folds into the Ketosynthase family 3 (KS3) domain; it reads KRRVVITGLG…GTNGTLVLSR (409 aa). Residues cysteine 164, histidine 304, and histidine 341 each act as for beta-ketoacyl synthase activity in the active site.

Belongs to the thiolase-like superfamily. Beta-ketoacyl-ACP synthases family. As to quaternary structure, homodimer.

It catalyses the reaction a fatty acyl-[ACP] + malonyl-[ACP] + H(+) = a 3-oxoacyl-[ACP] + holo-[ACP] + CO2. It carries out the reaction (9Z)-hexadecenoyl-[ACP] + malonyl-[ACP] + H(+) = 3-oxo-(11Z)-octadecenoyl-[ACP] + holo-[ACP] + CO2. It participates in lipid metabolism; fatty acid biosynthesis. Functionally, involved in the type II fatty acid elongation cycle. Catalyzes the elongation of a wide range of acyl-ACP by the addition of two carbons from malonyl-ACP to an acyl acceptor. Can efficiently catalyze the conversion of palmitoleoyl-ACP (cis-hexadec-9-enoyl-ACP) to cis-vaccenoyl-ACP (cis-octadec-11-enoyl-ACP), an essential step in the thermal regulation of fatty acid composition. This chain is 3-oxoacyl-[acyl-carrier-protein] synthase 2 (fabF), found in Coxiella burnetii (strain RSA 493 / Nine Mile phase I).